The following is a 471-amino-acid chain: Phosphatidylinositol 4-kinase type 2-alpha (471 aa).

2 disordered regions span residues 1-25 (MDET…QCSP) and 48-101 (PGSA…PDDP). Residues 90–101 (AERERNKFPDDP) are compositionally biased toward basic and acidic residues. Positions 117–445 (DILPERISQG…VQTPPVIVET (329 aa)) constitute a PI3K/PI4K catalytic domain. The segment at 123–129 (ISQGSSG) is G-loop. Residues 124–130 (SQGSSGS) and lysine 145 contribute to the ATP site. The tract at residues 150 to 152 (EPY) is important for substrate binding. Positions 158–171 (KWTKWLQKLCCPCC) are important for interaction with membranes. 4 S-palmitoyl cysteine lipidation sites follow: cysteine 167, cysteine 168, cysteine 170, and cysteine 171. Position 254–257 (254–257 (QLFV)) interacts with ATP. Positions 261–269 (KDADYWLRR) are important for interaction with membranes. Positions 298-306 (RNTDRGNDN) are catalytic loop. Residues 336–356 (AIDNGLAFPLKHPDSWRAYPF) are activation loop. Aspartate 338 contacts ATP. Residues 351–360 (WRAYPFYWAW) are important for interaction with membranes.

The protein belongs to the PI3/PI4-kinase family. Type II PI4K subfamily.

The protein localises to the golgi apparatus. It localises to the trans-Golgi network membrane. It is found in the membrane raft. The protein resides in the endosome. Its subcellular location is the endosome membrane. The protein localises to the cytoplasmic vesicle. It localises to the cell projection. It is found in the dendrite. The protein resides in the presynaptic cell membrane. Its subcellular location is the synapse. The protein localises to the synaptosome. It localises to the mitochondrion. It is found in the membrane. The protein resides in the cell membrane. Its subcellular location is the perikaryon. The protein localises to the neuron projection. It carries out the reaction a 1,2-diacyl-sn-glycero-3-phospho-(1D-myo-inositol) + ATP = a 1,2-diacyl-sn-glycero-3-phospho-(1D-myo-inositol 4-phosphate) + ADP + H(+). Its function is as follows. Membrane-bound phosphatidylinositol-4 kinase (PI4-kinase) that catalyzes the phosphorylation of phosphatidylinositol (PI) to phosphatidylinositol 4-phosphate (PI4P), a lipid that plays important roles in endocytosis, Golgi function, protein sorting and membrane trafficking. Besides, phosphorylation of phosphatidylinositol (PI) to phosphatidylinositol 4-phosphate (PI4P) is the first committed step in the generation of phosphatidylinositol 4,5-bisphosphate (PIP2), a precursor of the second messenger inositol 1,4,5-trisphosphate (InsP3). The polypeptide is Phosphatidylinositol 4-kinase type 2-alpha (pi4k2a) (Xenopus tropicalis (Western clawed frog)).